A 371-amino-acid chain; its full sequence is Serpentine receptor class delta-1 (371 aa).

The next 7 helical transmembrane spans lie at 31–51 (LSEVICGFGIVLNLLLIYVIF), 62–82 (AVLLFNFAIFDLLTCVASLLA), 109–129 (CFFCHCFVCHAMAHSQWILLI), 148–168 (MIVIVSLFYAMSAVIFLFYFW), 209–229 (IPSLIAIFYMTMPCVPIYFII), 267–287 (AIPIFWLVASGIFTLAEFGII), and 295–315 (ITFRLMDCIPSSSPLVAFIFI). Residues 344–371 (EKFNQPPKQPTNPAQQSANNDAAKTEKV) are disordered. Residues 354–365 (TNPAQQSANNDA) are compositionally biased toward polar residues.

It belongs to the nematode receptor-like protein srd family.

The protein resides in the membrane. The chain is Serpentine receptor class delta-1 (srd-1) from Caenorhabditis elegans.